The sequence spans 960 residues: Chromosome transmission fidelity protein 18 (960 aa).

2 disordered regions span residues 56 to 79 (DLFH…STLD) and 91 to 113 (DISE…YPNT). Positions 58–69 (FHSSQPVGSPTR) are enriched in polar residues. An ATP-binding site is contributed by 423–430 (GLAGAGKT).

It belongs to the activator 1 small subunits family. CTF18 subfamily. In terms of assembly, component of the ctf18-RFC complex which consists of ctf18, ctf8, dcc1, rfc2, rfc3, rfc4 and rfc5.

It localises to the nucleus. In terms of biological role, essential for the fidelity of chromosome transmission. Required for the DNA replication block checkpoint. Replication factor C (RFC) complex has an essential but redundant activity in sister chromatid cohesion establishment. Acts as a PCNA loader, loading PCNA onto primed templates. An RFC-like complex (ctf18-RFC) is formed where ctf18 replaces rfc1 in the RFC complex along with the association of dcc1 and ctf8. This complex is required for efficient establishment of chromosome cohesion during S-phase. The chain is Chromosome transmission fidelity protein 18 (ctf18) from Schizosaccharomyces pombe (strain 972 / ATCC 24843) (Fission yeast).